A 235-amino-acid polypeptide reads, in one-letter code: 2-C-methyl-D-erythritol 4-phosphate cytidylyltransferase (235 aa).

The protein belongs to the IspD/TarI cytidylyltransferase family. IspD subfamily.

The catalysed reaction is 2-C-methyl-D-erythritol 4-phosphate + CTP + H(+) = 4-CDP-2-C-methyl-D-erythritol + diphosphate. The protein operates within isoprenoid biosynthesis; isopentenyl diphosphate biosynthesis via DXP pathway; isopentenyl diphosphate from 1-deoxy-D-xylulose 5-phosphate: step 2/6. In terms of biological role, catalyzes the formation of 4-diphosphocytidyl-2-C-methyl-D-erythritol from CTP and 2-C-methyl-D-erythritol 4-phosphate (MEP). The chain is 2-C-methyl-D-erythritol 4-phosphate cytidylyltransferase from Pseudomonas putida (strain W619).